A 171-amino-acid polypeptide reads, in one-letter code: 3-hydroxydecanoyl-[acyl-carrier-protein] dehydratase (171 aa).

Histidine 70 is an active-site residue.

It belongs to the thioester dehydratase family. FabA subfamily. Homodimer.

Its subcellular location is the cytoplasm. It catalyses the reaction a (3R)-hydroxyacyl-[ACP] = a (2E)-enoyl-[ACP] + H2O. It carries out the reaction (3R)-hydroxydecanoyl-[ACP] = (2E)-decenoyl-[ACP] + H2O. The enzyme catalyses (2E)-decenoyl-[ACP] = (3Z)-decenoyl-[ACP]. Its pathway is lipid metabolism; fatty acid biosynthesis. Functionally, necessary for the introduction of cis unsaturation into fatty acids. Catalyzes the dehydration of (3R)-3-hydroxydecanoyl-ACP to E-(2)-decenoyl-ACP and then its isomerization to Z-(3)-decenoyl-ACP. Can catalyze the dehydratase reaction for beta-hydroxyacyl-ACPs with saturated chain lengths up to 16:0, being most active on intermediate chain length. This chain is 3-hydroxydecanoyl-[acyl-carrier-protein] dehydratase, found in Stenotrophomonas maltophilia (strain R551-3).